We begin with the raw amino-acid sequence, 206 residues long: High frequency lysogenization protein HflD homolog (206 aa).

The protein belongs to the HflD family.

Its subcellular location is the cytoplasm. The protein localises to the cell inner membrane. In Marinobacter nauticus (strain ATCC 700491 / DSM 11845 / VT8) (Marinobacter aquaeolei), this protein is High frequency lysogenization protein HflD homolog.